Reading from the N-terminus, the 270-residue chain is Sulfur carrier protein FdhD (270 aa).

Residue cysteine 108 is the Cysteine persulfide intermediate of the active site. Position 247–252 (247–252 (FIRDGR)) interacts with Mo-bis(molybdopterin guanine dinucleotide).

The protein belongs to the FdhD family.

The protein resides in the cytoplasm. Its function is as follows. Required for formate dehydrogenase (FDH) activity. Acts as a sulfur carrier protein that transfers sulfur from IscS to the molybdenum cofactor prior to its insertion into FDH. The protein is Sulfur carrier protein FdhD of Halalkalibacterium halodurans (strain ATCC BAA-125 / DSM 18197 / FERM 7344 / JCM 9153 / C-125) (Bacillus halodurans).